We begin with the raw amino-acid sequence, 173 residues long: MLRHLLRHENNKVFVLILLYCVLVSILKLCTAQPDSSVAATDNDITHLGDDCQVTPVIHVLQYPGCVPKPIPSFACVGRCASYIQVSGSKIWQMERSCMCCQESGEREAAVSLFCPKVKPGERKFKKVLTKAPLECMCRPCTSIEESGIIPQEIAGYSDEGPLNNHFRRIALQ.

An N-terminal signal peptide occupies residues 1 to 32 (MLRHLLRHENNKVFVLILLYCVLVSILKLCTA). Disulfide bonds link Cys-52-Cys-101, Cys-66-Cys-115, Cys-76-Cys-136, Cys-80-Cys-138, and Cys-98-Cys-141. The CTCK domain maps to 52-142 (CQVTPVIHVL…PLECMCRPCT (91 aa)).

Heterodimer of Burs and Pburs. In terms of tissue distribution, expressed in one to two pairs of neurons in each of the thoracic and abdominal neuromeres of the larval CNS. Coexpressed with CCAP in most CCAP-specific neurons. Coexpressed with Pburs in four bilateral neurons in thoracic and abdominal neuromeres of the ventral nervous system.

It is found in the secreted. Its function is as follows. Final heterodimeric neurohormone released at the end of the molting cycle, involved in the sclerotization (tanning) of the insect cuticle, melanization and wing spreading. Heterodimer specifically activates the G protein-coupled receptor rk. The sequence is that of Bursicon from Drosophila melanogaster (Fruit fly).